Consider the following 838-residue polypeptide: MGPGLWVVMGVLVGVAGGHDTYWTEQIDPWFLHGLGLARTYWRDTNTGRLWLPNTPDASDPQRGRLAPPGELNLTTASVPMLRWYAERFCFVLVTTAEFPRDPGQLLYIPKTYLLGRPRNASLPELPEAGPTSRPPAEVTQLKGLSHNPGASALLRSRAWVTFAAAPDREGLTFPRGDDGATERHPDGRRNAPPPGPPAGTPRHPTTNLSIAHLHNASVTWLAARGLLRTPGRYVYLSPSASTWPVGVWTTGGLAFGCDAALVRARYGKGFMGLVISMRDSPPAEIIVVPADKTLARVGNPTDENAPAVLPGPPAGPRYRVFVLGAPTPADNGSALDALRRVAGYPEESTNYAQYMSRAYAEFLGEDPGSGTDARPSLFWRLAGLLASSGFAFVNAAHAHDAIRLSDLLGFLAHSRVLAGLAARGAAGCAADSVFLNVSVLDPAARLRLEARLGHLVAAILEREQSLVAHALGYQLAFVLDSPAAYGAVAPSAARLIDALYAEFLGGRALTAPMVRRALFYATAVLRAPFLAGAPSAEQRERARRGLLITTALCTSDVAAATHADLRAALARTDHQKNLFWLPDHFSPCAASLRFDLAEGGFILDALAMATRSDIPADVMAQQTRGVASVLTRWAHYNALIRAFVPEATHQCSGPSHNAEPRILVPITHNASYVVTHTPLPRGIGYKLTGVDVRRPLFITYLTATCEGHAREIEPKRLVRTENRRDLGLVGAVFLRYTPAGEVMSVLLVDTDATQQQLAQGPVAGTPNVFSSDVPSVALLLFPNGTVIHLLAFDTLPIATIAPGFLAASALGVVMITAALAGILRVVRTCVPFLWRRE.

Residues 1 to 18 form the signal peptide; sequence MGPGLWVVMGVLVGVAGG. At 21 to 803 the chain is on the virion surface side; it reads TYWTEQIDPW…DTLPIATIAP (783 aa). N73 and N120 each carry an N-linked (GlcNAc...) asparagine; by host glycan. Over residues 171–190 the composition is skewed to basic and acidic residues; sequence GLTFPRGDDGATERHPDGRR. Residues 171–207 are disordered; the sequence is GLTFPRGDDGATERHPDGRRNAPPPGPPAGTPRHPTT. Residues N208 and N216 are each glycosylated (N-linked (GlcNAc...) asparagine; by host). C258 and C429 are disulfide-bonded. The tract at residues 259–323 is interaction with gL; it reads DAALVRARYG…PAGPRYRVFV (65 aa). N-linked (GlcNAc...) asparagine; by host glycosylation is found at N332, N437, N670, and N784. Residues 804 to 824 traverse the membrane as a helical segment; sequence GFLAASALGVVMITAALAGIL. Residues 825–838 lie on the Intravirion side of the membrane; the sequence is RVVRTCVPFLWRRE.

This sequence belongs to the herpesviridae glycoprotein H family. As to quaternary structure, interacts with glycoprotein L (gL); this interaction is necessary for the correct processing and cell surface expression of gH. The heterodimer gH/gL seems to interact with gB trimers during fusion. Interacts with host integrins ITGAV/ITGB3 to mediate viral entry into epithelial cells. N-glycosylated, O-glycosylated, and sialylated.

The protein localises to the virion membrane. It is found in the host cell membrane. Its subcellular location is the host endosome membrane. Its function is as follows. The heterodimer glycoprotein H-glycoprotein L is required for the fusion of viral and plasma membranes leading to virus entry into the host cell. Following initial binding to host receptor, membrane fusion is mediated by the fusion machinery composed of gB and the heterodimer gH/gL. May also be involved in the fusion between the virion envelope and the outer nuclear membrane during virion morphogenesis. Interaction with host integrins ITGAV/ITGB3 triggers release of cytosolic Ca(2+) and FAK phosphorylation leading to efficient viral entry into host genital tract epithelial cells. In Human herpesvirus 2 (strain HG52) (HHV-2), this protein is Envelope glycoprotein H.